Here is a 491-residue protein sequence, read N- to C-terminus: Glutamyl-tRNA(Gln) amidotransferase subunit A (491 aa).

Active-site charge relay system residues include lysine 78 and serine 158. Serine 182 (acyl-ester intermediate) is an active-site residue.

The protein belongs to the amidase family. GatA subfamily. Heterotrimer of A, B and C subunits.

It catalyses the reaction L-glutamyl-tRNA(Gln) + L-glutamine + ATP + H2O = L-glutaminyl-tRNA(Gln) + L-glutamate + ADP + phosphate + H(+). In terms of biological role, allows the formation of correctly charged Gln-tRNA(Gln) through the transamidation of misacylated Glu-tRNA(Gln) in organisms which lack glutaminyl-tRNA synthetase. The reaction takes place in the presence of glutamine and ATP through an activated gamma-phospho-Glu-tRNA(Gln). The protein is Glutamyl-tRNA(Gln) amidotransferase subunit A of Bradyrhizobium sp. (strain BTAi1 / ATCC BAA-1182).